Reading from the N-terminus, the 66-residue chain is Large ribosomal subunit protein uL29 (66 aa).

Belongs to the universal ribosomal protein uL29 family.

This chain is Large ribosomal subunit protein uL29, found in Helicobacter pylori (strain Shi470).